The primary structure comprises 80 residues: Large ribosomal subunit protein uL29 (80 aa).

This sequence belongs to the universal ribosomal protein uL29 family.

The polypeptide is Large ribosomal subunit protein uL29 (Mycobacterium marinum (strain ATCC BAA-535 / M)).